A 581-amino-acid chain; its full sequence is DNA primase (581 aa).

The CHC2-type zinc finger occupies 40–64 (CPFHNEKTPSFTVNGEKQFYHCFGC). The Toprim domain maps to 259-341 (NRLLVVEGYM…GRQLRFMFLP (83 aa)). Mg(2+)-binding residues include Glu265, Asp309, and Asp311.

The protein belongs to the DnaG primase family. In terms of assembly, monomer. Interacts with DnaB. It depends on Zn(2+) as a cofactor. Mg(2+) is required as a cofactor.

The catalysed reaction is ssDNA + n NTP = ssDNA/pppN(pN)n-1 hybrid + (n-1) diphosphate.. Its function is as follows. RNA polymerase that catalyzes the synthesis of short RNA molecules used as primers for DNA polymerase during DNA replication. This Escherichia coli O6:H1 (strain CFT073 / ATCC 700928 / UPEC) protein is DNA primase.